Consider the following 193-residue polypeptide: Chromophore lyase CpcS/CpeS 4 (193 aa).

This sequence belongs to the CpcS/CpeS biliprotein lyase family.

In terms of biological role, covalently attaches a chromophore to Cys residue(s) of phycobiliproteins. The protein is Chromophore lyase CpcS/CpeS 4 of Trichodesmium erythraeum (strain IMS101).